Here is a 142-residue protein sequence, read N- to C-terminus: Large ribosomal subunit protein uL13 (142 aa).

The protein belongs to the universal ribosomal protein uL13 family. As to quaternary structure, part of the 50S ribosomal subunit.

In terms of biological role, this protein is one of the early assembly proteins of the 50S ribosomal subunit, although it is not seen to bind rRNA by itself. It is important during the early stages of 50S assembly. This Pectobacterium carotovorum subsp. carotovorum (strain PC1) protein is Large ribosomal subunit protein uL13.